Reading from the N-terminus, the 376-residue chain is NAD-capped RNA hydrolase (376 aa).

Positions 182, 185, 200, and 211 each coordinate Zn(2+). Substrate is bound by residues Tyr222, 258 to 260 (AGF), Glu274, Glu278, and Glu321. The region spanning 223–351 (PRTDPCVIMV…KDGPAPILFP (129 aa)) is the Nudix hydrolase domain. Mg(2+)-binding residues include Ala258, Glu274, Glu278, and Glu321. The short motif at 259–280 (GFLEPGESLEEAVVRETYEESG) is the Nudix box element. The short motif at 374-376 (VKM) is the Microbody targeting signal element.

This sequence belongs to the Nudix hydrolase family. NudC subfamily. Homodimer. Requires Mg(2+) as cofactor. Zn(2+) is required as a cofactor.

It carries out the reaction a 5'-end NAD(+)-phospho-ribonucleoside in mRNA + H2O = a 5'-end phospho-adenosine-phospho-ribonucleoside in mRNA + beta-nicotinamide D-ribonucleotide + 2 H(+). The catalysed reaction is NAD(+) + H2O = beta-nicotinamide D-ribonucleotide + AMP + 2 H(+). It catalyses the reaction NADH + H2O = reduced beta-nicotinamide D-ribonucleotide + AMP + 2 H(+). Its function is as follows. mRNA decapping enzyme that specifically removes the nicotinamide adenine dinucleotide (NAD) cap from a subset of mRNAs by hydrolyzing the diphosphate linkage to produce nicotinamide mononucleotide (NMN) and 5' monophosphate mRNA. The NAD-cap is present at the 5'-end of some RNAs; in contrast to the canonical N7 methylguanosine (m7G) cap, the NAD cap promotes mRNA decay. Mediates the hydrolysis of some nucleoside diphosphate derivatives. This is NAD-capped RNA hydrolase from Schizosaccharomyces pombe (strain 972 / ATCC 24843) (Fission yeast).